An 845-amino-acid chain; its full sequence is Poly(A) RNA polymerase gld-4 (845 aa).

The segment at 1–55 (MNEDSRLSSSQQPSTSTPRSSIPSTMNSDEPNTCRRLSQSQEQPSTSRTCKSETP) is disordered. Positions 7–25 (LSSSQQPSTSTPRSSIPST) are enriched in low complexity. Residues 26–49 (MNSDEPNTCRRLSQSQEQPSTSRT) are compositionally biased toward polar residues. Residues Asp139 and Asp141 each coordinate Mg(2+). The PAP-associated domain occupies 276–335 (NLGHLLLRFLELYSLEFNFEEMGISPGQCCYIPKSASGARYGHKQAQPGNLALEDPLLTA). Basic and acidic residues predominate over residues 482-506 (KSLEKMPACDDNKKEEELVATRETD). 2 disordered regions span residues 482–733 (KSLE…SEEP) and 788–845 (NALT…RLQR). The span at 535–551 (TSTQSVNTSATVSTAAS) shows a compositional bias: low complexity. Composition is skewed to polar residues over residues 561–571 (PGLSSSMGNQS) and 579–588 (GINNRNNSAV). Over residues 605–620 (RESKRTQTTSEDKMQD) the composition is skewed to basic and acidic residues. Basic residues predominate over residues 643-653 (SHKHRNAHPQR). 4 stretches are compositionally biased toward polar residues: residues 654–666 (QRPS…QGSD), 695–732 (RQQT…SSEE), 788–805 (NALT…TSMQ), and 819–828 (DNNSATSSTD).

In terms of assembly, interacts with gls-1 isoform C. The cofactor is Mg(2+). Requires Mn(2+) as cofactor. Germline-specific.

The protein localises to the cytoplasm. It localises to the cytoplasmic granule. It is found in the perinuclear region. It carries out the reaction RNA(n) + ATP = RNA(n)-3'-adenine ribonucleotide + diphosphate. Cytoplasmic poly(A) RNA polymerase that adds successive AMP monomers to the 3'-end of specific RNAs, forming a poly(A) tail. The enzymatic activity is enhanced by its interaction with gls-1. Required, together with gld-2, for early meiotic progression in male and female germ cells and for gld-1 protein accumulation in the hermaphrodite germline. In the germline, forms a complex with gls-1 which directly binds to gld-1 mRNA and prevents its degradation. The protein is Poly(A) RNA polymerase gld-4 of Caenorhabditis elegans.